An 855-amino-acid chain; its full sequence is Axonemal dynein light chain domain-containing protein 1 (855 aa).

Polar residues predominate over residues 1-17; that stretch reads MSLPKTPSTPLNSASTS. Residues 1 to 31 form a disordered region; the sequence is MSLPKTPSTPLNSASTSESKKLVSVATEGTR. Coiled-coil stretches lie at residues 316–402, 451–480, and 571–596; these read QRIL…WSSA, LQKL…RETL, and SERQ…RING.

It is found in the cytoplasm. May be essential for spermiogenesis and male fertility probably by regulating the manchette dynamics, spermatid head shaping and sperm flagellum assembly. This is Axonemal dynein light chain domain-containing protein 1 (AXDND1) from Macaca fascicularis (Crab-eating macaque).